The following is a 191-amino-acid chain: Dephospho-CoA kinase (191 aa).

One can recognise a DPCK domain in the interval 3–191 (AIGITGSYAS…KLIKDLECRV (189 aa)). 11–16 (ASGKTF) provides a ligand contact to ATP.

The protein belongs to the CoaE family.

The protein localises to the cytoplasm. It catalyses the reaction 3'-dephospho-CoA + ATP = ADP + CoA + H(+). The protein operates within cofactor biosynthesis; coenzyme A biosynthesis; CoA from (R)-pantothenate: step 5/5. Its function is as follows. Catalyzes the phosphorylation of the 3'-hydroxyl group of dephosphocoenzyme A to form coenzyme A. The polypeptide is Dephospho-CoA kinase (Rickettsia prowazekii (strain Madrid E)).